The following is a 468-amino-acid chain: UDP-N-acetylmuramoyl-L-alanine--L-glutamate ligase (468 aa).

Position 122–128 (122–128 (GTKGKST)) interacts with ATP.

It belongs to the MurCDEF family. MurD2 subfamily.

The protein localises to the cytoplasm. The catalysed reaction is UDP-N-acetyl-alpha-D-muramoyl-L-alanine + L-glutamate + ATP = UDP-N-acetyl-alpha-D-muramoyl-L-alanyl-L-glutamate + ADP + phosphate + H(+). Its pathway is cell wall biogenesis; peptidoglycan biosynthesis. Its function is as follows. Cell wall formation. Catalyzes the addition of L-glutamate to the nucleotide precursor UDP-N-acetylmuramoyl-L-alanine. This Xylella fastidiosa (strain 9a5c) protein is UDP-N-acetylmuramoyl-L-alanine--L-glutamate ligase.